The chain runs to 117 residues: Immunoglobulin lambda variable 6-57 (117 aa).

Positions 1 to 19 are cleaved as a signal peptide; that stretch reads MAWAPLLLTLLAHCTGSWA. A framework-1 region spans residues 20–44; the sequence is NFMLTQPHSVSESPGKTVTISCTGS. The 98-residue stretch at 20–117 folds into the Ig-like domain; it reads NFMLTQPHSV…YYCQSYDSSN (98 aa). Cys-41 and Cys-110 form a disulfide bridge. The segment at 45–52 is complementarity-determining-1; the sequence is SGSIASNY. Residues 53-69 form a framework-2 region; that stretch reads VQWYQQRPGSAPTTVIY. The interval 65–97 is disordered; sequence TTVIYEDNQRPSGVPDRFSGSIDSSSNSASLTI. Residues 70–72 form a complementarity-determining-2 region; the sequence is EDN. Positions 73–110 are framework-3; that stretch reads QRPSGVPDRFSGSIDSSSNSASLTISGLKTEDEADYYC. Low complexity predominate over residues 83 to 97; the sequence is SGSIDSSSNSASLTI. Positions 111-117 are complementarity-determining-3; the sequence is QSYDSSN.

As to quaternary structure, immunoglobulins are composed of two identical heavy chains and two identical light chains; disulfide-linked.

It is found in the secreted. The protein resides in the cell membrane. Its function is as follows. V region of the variable domain of immunoglobulin light chains that participates in the antigen recognition. Immunoglobulins, also known as antibodies, are membrane-bound or secreted glycoproteins produced by B lymphocytes. In the recognition phase of humoral immunity, the membrane-bound immunoglobulins serve as receptors which, upon binding of a specific antigen, trigger the clonal expansion and differentiation of B lymphocytes into immunoglobulins-secreting plasma cells. Secreted immunoglobulins mediate the effector phase of humoral immunity, which results in the elimination of bound antigens. The antigen binding site is formed by the variable domain of one heavy chain, together with that of its associated light chain. Thus, each immunoglobulin has two antigen binding sites with remarkable affinity for a particular antigen. The variable domains are assembled by a process called V-(D)-J rearrangement and can then be subjected to somatic hypermutations which, after exposure to antigen and selection, allow affinity maturation for a particular antigen. This is Immunoglobulin lambda variable 6-57 from Homo sapiens (Human).